The following is a 513-amino-acid chain: Flagellin A (513 aa).

The protein belongs to the bacterial flagellin family. As to quaternary structure, heteromer of FlaA and FlaB. FlaB is located proximal to the hook while the remainder of the filament is composed of the predominant FlaA.

Its subcellular location is the secreted. The protein resides in the bacterial flagellum. Functionally, flagellin is the subunit protein which polymerizes to form the filaments of bacterial flagella. Important for motility and virulence. The sequence is that of Flagellin A (flaA) from Helicobacter felis (strain ATCC 49179 / CCUG 28539 / NCTC 12436 / CS1).